Reading from the N-terminus, the 202-residue chain is Putative chromophore lyase CpcV (202 aa).

The protein belongs to the CpcS/CpeS biliprotein lyase family.

Functionally, covalently attaches a chromophore to Cys residue(s) of phycobiliproteins. The polypeptide is Putative chromophore lyase CpcV (cpcV) (Picosynechococcus sp. (strain ATCC 27264 / PCC 7002 / PR-6) (Agmenellum quadruplicatum)).